Consider the following 202-residue polypeptide: Dual-action ribosomal maturation protein DarP (202 aa).

Residues 1 to 13 (MPPMTRNTRNNPN) are compositionally biased toward low complexity. Residues 1 to 39 (MPPMTRNTRNNPNGRFPGAFAPEDEDDLPKSKSQRKRDM) form a disordered region.

Belongs to the DarP family.

The protein resides in the cytoplasm. Its function is as follows. Member of a network of 50S ribosomal subunit biogenesis factors which assembles along the 30S-50S interface, preventing incorrect 23S rRNA structures from forming. Promotes peptidyl transferase center (PTC) maturation. The protein is Dual-action ribosomal maturation protein DarP of Cupriavidus metallidurans (strain ATCC 43123 / DSM 2839 / NBRC 102507 / CH34) (Ralstonia metallidurans).